Here is a 263-residue protein sequence, read N- to C-terminus: Thymidylate synthase (263 aa).

Residues R25 and 123–124 (RR) contribute to the dUMP site. Residue C143 is the Nucleophile of the active site. DUMP contacts are provided by residues 163–166 (RSGD), N174, and 204–206 (HIY). D166 contributes to the (6R)-5,10-methylene-5,6,7,8-tetrahydrofolate binding site. S262 is a binding site for (6R)-5,10-methylene-5,6,7,8-tetrahydrofolate.

The protein belongs to the thymidylate synthase family. Bacterial-type ThyA subfamily. In terms of assembly, homodimer.

Its subcellular location is the cytoplasm. It carries out the reaction dUMP + (6R)-5,10-methylene-5,6,7,8-tetrahydrofolate = 7,8-dihydrofolate + dTMP. It participates in pyrimidine metabolism; dTTP biosynthesis. Functionally, catalyzes the reductive methylation of 2'-deoxyuridine-5'-monophosphate (dUMP) to 2'-deoxythymidine-5'-monophosphate (dTMP) while utilizing 5,10-methylenetetrahydrofolate (mTHF) as the methyl donor and reductant in the reaction, yielding dihydrofolate (DHF) as a by-product. This enzymatic reaction provides an intracellular de novo source of dTMP, an essential precursor for DNA biosynthesis. The chain is Thymidylate synthase from Clostridium beijerinckii (strain ATCC 51743 / NCIMB 8052) (Clostridium acetobutylicum).